The chain runs to 483 residues: Deoxyribodipyrimidine photo-lyase (483 aa).

The region spanning 2–136 (QKNLIWFRND…LVKGFHDNLL (135 aa)) is the Photolyase/cryptochrome alpha/beta domain. The (6R)-5,10-methylene-5,6,7,8-tetrahydrofolate site is built by asparagine 109 and glutamate 110. Residue tyrosine 225 coordinates FAD. Residue arginine 229 participates in DNA binding. 237 to 241 (TSMLS) is an FAD binding site. Interaction with DNA regions lie at residues 278 to 285 (QILWREFY) and 345 to 346 (NR). Residue 376–378 (DGD) coordinates FAD. DNA is bound at residue glutamine 408.

It belongs to the DNA photolyase class-1 family. As to quaternary structure, monomer. Requires FAD as cofactor. The cofactor is (6R)-5,10-methylene-5,6,7,8-tetrahydrofolate.

It catalyses the reaction cyclobutadipyrimidine (in DNA) = 2 pyrimidine residues (in DNA).. Functionally, involved in repair of UV radiation-induced DNA damage. Catalyzes the light-dependent monomerization (300-600 nm) of cyclobutyl pyrimidine dimers (in cis-syn configuration), which are formed between adjacent bases on the same DNA strand upon exposure to ultraviolet radiation. This chain is Deoxyribodipyrimidine photo-lyase (phrB), found in Buchnera aphidicola subsp. Acyrthosiphon pisum (strain APS) (Acyrthosiphon pisum symbiotic bacterium).